The following is a 314-amino-acid chain: MKKALIIGTRSSPLALWQAEFIKAELSKHYPSLDISLRHIKTTGDKILDAPLAKIGDKGLFTREIEHVMLRNEIDLAVHSLKDLPTETPEGLVITAITEREDNRDVLISKGKYTLKTLPQGAIVATSSLRRRSQLLHLRPDLEVIDMRGNLNTRFKRFEEGDAEAMLLAFAGVHRLEFSEHIAEIISFDDILPAVGQGALGIETRIDDEETRELLKVLNHAETELCTKCERSLLRTLEGGCQIPIGAHARIENGTFHFATYVGSIDGKRAIKKSLSRENVTTVEEAEQIGIEVADAARAAGANEILCEIRTDNA.

Cysteine 241 is modified (S-(dipyrrolylmethanemethyl)cysteine).

The protein belongs to the HMBS family. As to quaternary structure, monomer. It depends on dipyrromethane as a cofactor.

The enzyme catalyses 4 porphobilinogen + H2O = hydroxymethylbilane + 4 NH4(+). Its pathway is porphyrin-containing compound metabolism; protoporphyrin-IX biosynthesis; coproporphyrinogen-III from 5-aminolevulinate: step 2/4. The protein operates within porphyrin-containing compound metabolism; chlorophyll biosynthesis. In terms of biological role, tetrapolymerization of the monopyrrole PBG into the hydroxymethylbilane pre-uroporphyrinogen in several discrete steps. The polypeptide is Porphobilinogen deaminase (Chloroherpeton thalassium (strain ATCC 35110 / GB-78)).